A 99-amino-acid chain; its full sequence is Acylphosphatase-1 (99 aa).

At Ala2 the chain carries N-acetylalanine. An Acylphosphatase-like domain is found at 9 to 99 (SVDYEIFGKV…LDYSDFQIVK (91 aa)). Residues Arg24 and Asn42 contribute to the active site.

The protein belongs to the acylphosphatase family. Organ-common type isozyme is found in many different tissues.

The catalysed reaction is an acyl phosphate + H2O = a carboxylate + phosphate + H(+). The protein is Acylphosphatase-1 (ACYP1) of Homo sapiens (Human).